The chain runs to 458 residues: L-hydantoinase (458 aa).

Zn(2+) contacts are provided by His60, His62, Lys147, His183, His239, and Asp312. At Lys147 the chain carries N6-carboxylysine.

Homotetramer. The cofactor is Zn(2+). In terms of processing, carboxylation allows a single lysine to coordinate two zinc ions.

In terms of biological role, rather more predominant for the cleavage of aryl- than for alkyl-hydantoin derivatives. The stereoselectivity of this enzyme depends on the substrate used for bioconversion: strictly L-selective for the cleavage of D,L-5-indolylmethylhydantoin, but D-selective for the hydrolysis of D,L-methylthioethylhydantoin. The polypeptide is L-hydantoinase (lhyD) (Paenarthrobacter aurescens (Arthrobacter aurescens)).